Here is a 415-residue protein sequence, read N- to C-terminus: MFDRKLTLSQVDPEVWAAIQKEDVRQEQHIELIASENYASPAVMQAQGTQLTNKYAEGYPGKRYYGGCEYVDVVEQLAIDRLKQLFGAEAANVQPNSGSQANQGVYMAVLKPGDTVLGMSLAEGGHLTHGASVNASGKLYNFISYGLDANEVLDYAQVEQLAKEHKPKLIVAGASAYALHIDFERLARIAHDNGALLMVDIAHYAGLVAGGAYPNPVPHADFVTSTTHKSLRGPRGGVIMMKAEYEKIINSAIFPGIQGGPLMHVIAAKAVAFQEALSPEFKQYAQQVAKNAKVLAETLVKRGLRIVSGRTESHVMLVDLRPKGITGKEAEAVLGQAHITVNKNAIPNDPEKPFVTSGIRLGTPAMTTRGFKEAEAELTANLIADVLDNPRDEANIAAVRARVNELTARLPVYGG.

Residues leucine 121 and 125 to 127 (GHL) contribute to the (6S)-5,6,7,8-tetrahydrofolate site. Lysine 229 carries the post-translational modification N6-(pyridoxal phosphate)lysine.

The protein belongs to the SHMT family. In terms of assembly, homodimer. Pyridoxal 5'-phosphate serves as cofactor.

Its subcellular location is the cytoplasm. It carries out the reaction (6R)-5,10-methylene-5,6,7,8-tetrahydrofolate + glycine + H2O = (6S)-5,6,7,8-tetrahydrofolate + L-serine. It functions in the pathway one-carbon metabolism; tetrahydrofolate interconversion. The protein operates within amino-acid biosynthesis; glycine biosynthesis; glycine from L-serine: step 1/1. Functionally, catalyzes the reversible interconversion of serine and glycine with tetrahydrofolate (THF) serving as the one-carbon carrier. This reaction serves as the major source of one-carbon groups required for the biosynthesis of purines, thymidylate, methionine, and other important biomolecules. Also exhibits THF-independent aldolase activity toward beta-hydroxyamino acids, producing glycine and aldehydes, via a retro-aldol mechanism. This chain is Serine hydroxymethyltransferase, found in Bordetella petrii (strain ATCC BAA-461 / DSM 12804 / CCUG 43448).